Here is a 199-residue protein sequence, read N- to C-terminus: FMN-dependent NADH:quinone oxidoreductase (199 aa).

Residues S9 and 95–98 (MYNF) each bind FMN.

The protein belongs to the azoreductase type 1 family. Homodimer. Requires FMN as cofactor.

The catalysed reaction is 2 a quinone + NADH + H(+) = 2 a 1,4-benzosemiquinone + NAD(+). The enzyme catalyses N,N-dimethyl-1,4-phenylenediamine + anthranilate + 2 NAD(+) = 2-(4-dimethylaminophenyl)diazenylbenzoate + 2 NADH + 2 H(+). In terms of biological role, quinone reductase that provides resistance to thiol-specific stress caused by electrophilic quinones. Functionally, also exhibits azoreductase activity. Catalyzes the reductive cleavage of the azo bond in aromatic azo compounds to the corresponding amines. The sequence is that of FMN-dependent NADH:quinone oxidoreductase from Dechloromonas aromatica (strain RCB).